A 129-amino-acid polypeptide reads, in one-letter code: Probable cytochrome b5 2 (129 aa).

A Cytochrome b5 heme-binding domain is found at 3–79 (EKTITVEEVL…LEKFYIGNLL (77 aa)). Heme contacts are provided by H38 and H62. Residues 105-125 (VKPAMWLFVLVMVVAYFAFRK) form a helical membrane-spanning segment.

It belongs to the cytochrome b5 family.

It is found in the endoplasmic reticulum membrane. The protein resides in the microsome membrane. Its subcellular location is the mitochondrion. Its function is as follows. Membrane bound hemoprotein which function as an electron carrier for several membrane bound oxygenases. The protein is Probable cytochrome b5 2 (oca8) of Schizosaccharomyces pombe (strain 972 / ATCC 24843) (Fission yeast).